The following is a 713-amino-acid chain: B3 domain-containing transcription factor VAL3 (713 aa).

The TF-B3 DNA-binding region spans 328–427 (FEKILSATDT…KLILGFRKAS (100 aa)). 2 disordered regions span residues 459–478 (VECS…SKRQ) and 616–713 (LNSD…TSSM). Residues 464-477 (GKKKSSMMITRSKR) are compositionally biased toward basic residues. Polar residues predominate over residues 616-629 (LNSDNGLHQSANNS). The span at 663-674 (TKSETLPHDDTV) shows a compositional bias: basic and acidic residues. Positions 676-688 (SSFTSPSSSSAHS) are enriched in low complexity. Residues 690–700 (NNKEDEGKLKT) are compositionally biased toward basic and acidic residues. Positions 701–713 (TTEIADTTTTSSM) are enriched in low complexity.

The protein localises to the nucleus. In terms of biological role, may be involved in plant development. The polypeptide is B3 domain-containing transcription factor VAL3 (VAL3) (Arabidopsis thaliana (Mouse-ear cress)).